Consider the following 286-residue polypeptide: NH(3)-dependent NAD(+) synthetase (286 aa).

An ATP-binding site is contributed by G43–S50. D49 lines the Mg(2+) pocket. R131 contacts deamido-NAD(+). T151 lines the ATP pocket. Mg(2+) is bound at residue E156. The deamido-NAD(+) site is built by K164 and D171. K180 and S202 together coordinate ATP. The tract at residues H257 to K286 is disordered. H262–K263 lines the deamido-NAD(+) pocket. Residues K277–K286 show a composition bias toward basic residues.

This sequence belongs to the NAD synthetase family. In terms of assembly, homodimer.

The enzyme catalyses deamido-NAD(+) + NH4(+) + ATP = AMP + diphosphate + NAD(+) + H(+). Its pathway is cofactor biosynthesis; NAD(+) biosynthesis; NAD(+) from deamido-NAD(+) (ammonia route): step 1/1. Catalyzes the ATP-dependent amidation of deamido-NAD to form NAD. Uses ammonia as a nitrogen source. The sequence is that of NH(3)-dependent NAD(+) synthetase from Aeropyrum pernix (strain ATCC 700893 / DSM 11879 / JCM 9820 / NBRC 100138 / K1).